The sequence spans 646 residues: ATP-dependent zinc metalloprotease FtsH (646 aa).

Residues 1-4 lie on the Cytoplasmic side of the membrane; the sequence is MTRS. The chain crosses the membrane as a helical span at residues 5–25; it reads LLWQMVIVLGAILMVNYVLTT. The Periplasmic segment spans residues 26 to 120; the sequence is LTPQTQEPVV…VRPESKPSPW (95 aa). Residues 121–141 form a helical membrane-spanning segment; it reads ATAMIYMLPWLLIVGVWWFVI. Residues 142 to 646 are Cytoplasmic-facing; the sequence is KGMRTRQGPG…GELAGGAVEG (505 aa). 216–223 is a binding site for ATP; the sequence is GPPGTGKT. Residue histidine 437 participates in Zn(2+) binding. Glutamate 438 is an active-site residue. Residues histidine 441 and aspartate 513 each contribute to the Zn(2+) site.

In the central section; belongs to the AAA ATPase family. This sequence in the C-terminal section; belongs to the peptidase M41 family. Homohexamer. Requires Zn(2+) as cofactor.

It is found in the cell inner membrane. Functionally, acts as a processive, ATP-dependent zinc metallopeptidase for both cytoplasmic and membrane proteins. Plays a role in the quality control of integral membrane proteins. The chain is ATP-dependent zinc metalloprotease FtsH from Syntrophotalea carbinolica (strain DSM 2380 / NBRC 103641 / GraBd1) (Pelobacter carbinolicus).